The following is a 445-amino-acid chain: MSNRKYFGTDGIRGRVGDAPITPDFVLKLGWAAGKVLARHGSRKIIIGKDTRISGYMLESALEAGLAAAGLSALFTGPMPTPAVAYLTRTFRAEAGIVISASHNPFYDNGIKFFSIDGTKLPDAVEEAIEAEMEKEISCVDSAELGKASRIVDAAGRYIEFCKATFPNELSLSELKIVVDCANGATYHIAPNVLRELGANVIAIGCEPNGVNINAEVGATDVRALQARVLAEKADLGIAFDGDGDRVIMVDHEGNKVDGDQIMYIIAREGLRQGQLRGGAVGTLMSNMGLELALKQLGIPFARAKVGDRYVLEKMQEKGWRIGAENSGHVILLDKTTTGDGIVAGLQVLAAMARNHMSLHDLCSGMKMFPQILVNVRYTAGSGDPLEHESVKAVTAEVEAALGNRGRVLLRKSGTEPLIRVMVEGEDEAQVTEFAHRIADAVKAV.

The active-site Phosphoserine intermediate is Ser102. Mg(2+)-binding residues include Ser102, Asp241, Asp243, and Asp245. Phosphoserine is present on Ser102.

This sequence belongs to the phosphohexose mutase family. It depends on Mg(2+) as a cofactor. Activated by phosphorylation.

It catalyses the reaction alpha-D-glucosamine 1-phosphate = D-glucosamine 6-phosphate. In terms of biological role, catalyzes the conversion of glucosamine-6-phosphate to glucosamine-1-phosphate. The sequence is that of Phosphoglucosamine mutase from Escherichia coli O139:H28 (strain E24377A / ETEC).